A 388-amino-acid polypeptide reads, in one-letter code: Protein SopA (388 aa).

Belongs to the ParA family.

Its function is as follows. This protein is essential for plasmid partition. It ensures the proper distribution of newly replicated plasmids to daughter cells during cell division. SopA is trans-acting. The polypeptide is Protein SopA (sopA) (Escherichia coli O157:H7).